The sequence spans 314 residues: Curved DNA-binding protein (314 aa).

Positions 5-69 constitute a J domain; the sequence is DYYKILDVEP…EKRAEYDELR (65 aa). The segment at 73–92 is disordered; it reads RQGRPFQTPPGWQSRAGAGA.

The protein localises to the cytoplasm. The protein resides in the nucleoid. Its function is as follows. DNA-binding protein that preferentially recognizes a curved DNA sequence. It is probably a functional analog of DnaJ; displays overlapping activities with DnaJ, but functions under different conditions, probably acting as a molecular chaperone in an adaptive response to environmental stresses other than heat shock. Lacks autonomous chaperone activity; binds native substrates and targets them for recognition by DnaK. Its activity is inhibited by the binding of CbpM. In Pseudomonas syringae pv. tomato (strain ATCC BAA-871 / DC3000), this protein is Curved DNA-binding protein.